Reading from the N-terminus, the 726-residue chain is ATP-dependent permease MDL1, mitochondrial (726 aa).

A mitochondrion-targeting transit peptide spans methionine 1–histidine 112. Residues asparagine 66, asparagine 113, and asparagine 132 are each glycosylated (N-linked (GlcNAc...) asparagine). 5 consecutive transmembrane segments (helical) span residues phenylalanine 158 to isoleucine 178, isoleucine 196 to serine 216, glycine 306 to valine 326, glycine 386 to leucine 406, and serine 423 to threonine 443. The 290-residue stretch at phenylalanine 158–lysine 447 folds into the ABC transmembrane type-1 domain. Residues leucine 482–tryptophan 719 form the ABC transporter domain. Asparagine 502 carries N-linked (GlcNAc...) asparagine glycosylation. Residue alanine 517–serine 524 coordinates ATP. N-linked (GlcNAc...) asparagine glycans are attached at residues asparagine 584, asparagine 598, and asparagine 668.

This sequence belongs to the ABC transporter superfamily. ABCB family. Mitochondrial peptide exporter (TC 3.A.1.212) subfamily.

The protein resides in the mitochondrion inner membrane. Its function is as follows. Mediates export of peptides generated upon proteolysis of mitochondrial inner membrane proteins. The chain is ATP-dependent permease MDL1, mitochondrial (mdl1) from Schizosaccharomyces pombe (strain 972 / ATCC 24843) (Fission yeast).